The chain runs to 301 residues: Helicase VP6-A (301 aa).

Disordered regions lie at residues 1–99 (MIDW…TTGT) and 163–208 (RRKE…TSVG). Basic and acidic residues-rich tracts occupy residues 8–30 (ESGK…KDGE), 37–55 (GQKK…DRRV), and 67–81 (GFRE…RGDG). K82 is a binding site for ATP. 2 stretches are compositionally biased toward basic and acidic residues: residues 163–177 (RRKE…VAEK) and 186–202 (VHGD…KTPE).

Belongs to the orbivirus VP6 family. Homohexamer.

The protein resides in the virion. The enzyme catalyses ATP + H2O = ADP + phosphate + H(+). Its function is as follows. ATP dependent RNA helicase essential for RNA packaging and viral transcription. Possesses ss- and dsRNA-binding capacity. The sequence is that of Helicase VP6-A (Segment-9) from Bluetongue virus 2 (isolate USA) (BTV 2).